Here is a 322-residue protein sequence, read N- to C-terminus: MNDATRTSTTPPALPMPDLRDSFPGPFPASAHADDIERHATQWLRTFPLIRSERALSALTHITGQGVARTFPTAGRDELFLCADLFLWLTAFDDAHGEATGAADPARLLRTTSEYVHLLAGHHEPPGGPSVFGAALRDLLDRYGERATPAQYARLTAHLRDNLFGILWEAHHLHRPDRVTLPDYLAMRPHTVFVRTVVATAEVMLGYELTEPDRSSEPVRELETAVADLAGWINDLASYAKETARDGSATLGLPALLMRQHECDLEEAFRRASLMCEQQAAVAAARIAELTAGGGPLADHAHALRSVASSYVWHIDDSRYRT.

A compositionally biased stretch (polar residues) spans 1–11 (MNDATRTSTTP). The disordered stretch occupies residues 1–26 (MNDATRTSTTPPALPMPDLRDSFPGP). D93 and E98 together coordinate Mg(2+). The DDXXXE motif motif lies at 93–98 (DDAHGE). R188 serves as a coordination point for substrate. 2 residues coordinate Mg(2+): N234 and S238. Residues 234–242 (NDLASYAKE) carry the NXXXSXXXE motif motif. Position 241 (K241) interacts with substrate. E242 serves as a coordination point for Mg(2+). Residue 319–320 (RY) coordinates substrate.

It belongs to the terpene synthase family. The cofactor is Mg(2+).

It catalyses the reaction (+)-copalyl diphosphate = (12E)-labda-8(17),12,14-triene + diphosphate. Functionally, involved in the biosynthesis of the labdane-type bicyclic diterpene labda-8(17),12(E),14-triene. Catalyzes the conversion of (+)-copalyl diphosphate to yield labda-8(17),12(E),14-triene. This chain is (12E)-labda-8(17),12,14-triene synthase, found in Streptomyces anulatus (Streptomyces chrysomallus).